We begin with the raw amino-acid sequence, 310 residues long: Cytochrome f (310 aa).

The N-terminal stretch at 1 to 27 (MRRILTFFLGSIIIGLSIIISPSSSFA) is a signal peptide. Residues tyrosine 28, cysteine 48, cysteine 51, and histidine 52 each coordinate heme. Residues 277-297 (VIGLIAFFAGVALTQILLVLK) form a helical membrane-spanning segment.

The protein belongs to the cytochrome f family. In terms of assembly, the 4 large subunits of the cytochrome b6-f complex are cytochrome b6, subunit IV (17 kDa polypeptide, PetD), cytochrome f and the Rieske protein, while the 4 small subunits are PetG, PetL, PetM and PetN. The complex functions as a dimer. Requires heme as cofactor.

It is found in the cellular thylakoid membrane. In terms of biological role, component of the cytochrome b6-f complex, which mediates electron transfer between photosystem II (PSII) and photosystem I (PSI), cyclic electron flow around PSI, and state transitions. The polypeptide is Cytochrome f (Prochlorococcus marinus (strain SARG / CCMP1375 / SS120)).